An 85-amino-acid polypeptide reads, in one-letter code: Putative regulatory protein Dtur_1444 (85 aa).

The protein belongs to the RemA family.

The sequence is that of Putative regulatory protein Dtur_1444 from Dictyoglomus turgidum (strain DSM 6724 / Z-1310).